The sequence spans 347 residues: NADH-quinone oxidoreductase subunit H (347 aa).

Helical transmembrane passes span 21-41 (IAGI…IIYA), 87-107 (GLFL…WAVI), 120-140 (VGLL…VIAG), 160-180 (ISYE…AGTF), 194-214 (WIIN…MFLI), 259-279 (LLMC…PLDI), 282-302 (LYLV…FFIF), and 324-344 (VFLP…MATG).

This sequence belongs to the complex I subunit 1 family. In terms of assembly, NDH-1 is composed of 14 different subunits. Subunits NuoA, H, J, K, L, M, N constitute the membrane sector of the complex.

Its subcellular location is the cell inner membrane. It carries out the reaction a quinone + NADH + 5 H(+)(in) = a quinol + NAD(+) + 4 H(+)(out). Functionally, NDH-1 shuttles electrons from NADH, via FMN and iron-sulfur (Fe-S) centers, to quinones in the respiratory chain. The immediate electron acceptor for the enzyme in this species is believed to be ubiquinone. Couples the redox reaction to proton translocation (for every two electrons transferred, four hydrogen ions are translocated across the cytoplasmic membrane), and thus conserves the redox energy in a proton gradient. This subunit may bind ubiquinone. This chain is NADH-quinone oxidoreductase subunit H, found in Novosphingobium aromaticivorans (strain ATCC 700278 / DSM 12444 / CCUG 56034 / CIP 105152 / NBRC 16084 / F199).